The chain runs to 180 residues: Inner membrane-spanning protein YciB (180 aa).

The next 5 membrane-spanning stretches (helical) occupy residues 10–30, 47–67, 74–94, 121–141, and 151–171; these read IIAF…GVLM, ITTR…VTLL, IKMK…GGLI, YAWI…AEFW, and VFGI…YMYH.

It belongs to the YciB family.

It is found in the cell inner membrane. Functionally, plays a role in cell envelope biogenesis, maintenance of cell envelope integrity and membrane homeostasis. The chain is Inner membrane-spanning protein YciB from Idiomarina loihiensis (strain ATCC BAA-735 / DSM 15497 / L2-TR).